Here is a 374-residue protein sequence, read N- to C-terminus: MAAGLDSWNSTINGTWEGDELGYKCRFNEDFKYVLLPVSYGVVCVLGLCLNVVALYIFLCRLKTWNASTTYMFHLAVSDSLYAASLPLLVYYYAQGDHWPFSTVLCKLVRFLFYTNLYCSILFLTCISVHRCLGVLRPLHSLSWGHARYARRVAAVVWVLVLACQAPVLYFVTTSVRGTRITCHDTSARELFSHFVAYSSVMLGLLFAVPFSIILVCYVLMARRLLKPAYGTTGLPRAKRKSVRTIALVLAVFALCFLPFHVTRTLYYSFRSLDLSCHTLNAINMAYKITRPLASANSCLDPVLYFLAGQRLVRFARDAKPATEPTPSPQARRKLGLHRPNRTDTVRKDLSISSDDSRRTESTPAGSETKDIRL.

Residues 1–32 (MAAGLDSWNSTINGTWEGDELGYKCRFNEDFK) lie on the Extracellular side of the membrane. Residues Asn9 and Asn13 are each glycosylated (N-linked (GlcNAc...) asparagine). Residues 33-59 (YVLLPVSYGVVCVLGLCLNVVALYIFL) form a helical membrane-spanning segment. At 60 to 70 (CRLKTWNASTT) the chain is on the cytoplasmic side. Residues 71 to 93 (YMFHLAVSDSLYAASLPLLVYYY) traverse the membrane as a helical segment. The Extracellular segment spans residues 94 to 110 (AQGDHWPFSTVLCKLVR). Cys106 and Cys183 form a disulfide bridge. Residues 111 to 129 (FLFYTNLYCSILFLTCISV) form a helical membrane-spanning segment. The Cytoplasmic portion of the chain corresponds to 130 to 152 (HRCLGVLRPLHSLSWGHARYARR). Residues 153–172 (VAAVVWVLVLACQAPVLYFV) traverse the membrane as a helical segment. The Extracellular segment spans residues 173–194 (TTSVRGTRITCHDTSARELFSH). A helical membrane pass occupies residues 195–220 (FVAYSSVMLGLLFAVPFSIILVCYVL). Residues 221–245 (MARRLLKPAYGTTGLPRAKRKSVRT) are Cytoplasmic-facing. The helical transmembrane segment at 246 to 268 (IALVLAVFALCFLPFHVTRTLYY) threads the bilayer. Residues 269–286 (SFRSLDLSCHTLNAINMA) lie on the Extracellular side of the membrane. A helical membrane pass occupies residues 287 to 308 (YKITRPLASANSCLDPVLYFLA). Residues 309–374 (GQRLVRFARD…AGSETKDIRL (66 aa)) are Cytoplasmic-facing. Positions 318-374 (DAKPATEPTPSPQARRKLGLHRPNRTDTVRKDLSISSDDSRRTESTPAGSETKDIRL) are disordered. Positions 331-340 (ARRKLGLHRP) are enriched in basic residues. The span at 341-361 (NRTDTVRKDLSISSDDSRRTE) shows a compositional bias: basic and acidic residues.

It belongs to the G-protein coupled receptor 1 family.

The protein localises to the cell membrane. Its function is as follows. Receptor for ATP and UTP coupled to G-proteins that activate a phosphatidylinositol-calcium second messenger system. The affinity range is UTP = ATP &gt; ATP-gamma-S &gt;&gt; 2-methylthio-ATP = ADP. The polypeptide is P2Y purinoceptor 2 (P2ry2) (Rattus norvegicus (Rat)).